The sequence spans 163 residues: Neurotrophin-3 (163 aa).

Positions 1-3 are cleaved as a signal peptide; that stretch reads IQS. Residues 4–119 constitute a propeptide that is removed on maturation; it reads TSMDQGILTE…VLNRTSRRKR (116 aa). The N-linked (GlcNAc...) asparagine glycan is linked to Asn112. Positions 112–132 are disordered; the sequence is NRTSRRKREGKSHRGEYSVCD. Positions 123–132 are enriched in basic and acidic residues; that stretch reads SHRGEYSVCD.

Belongs to the NGF-beta family.

Its subcellular location is the secreted. Its function is as follows. Seems to promote the survival of visceral and proprioceptive sensory neurons. The polypeptide is Neurotrophin-3 (NTF3) (Exiliboa placata (Oaxacan dwarf boa)).